The primary structure comprises 763 residues: ATP-dependent RNA helicase SUPV3L1, mitochondrial (763 aa).

A mitochondrion-targeting transit peptide spans 1 to 65; sequence MSVNRCIYLL…RPLDTSLFIP (65 aa). Residues 39 to 58 are disordered; that stretch reads RRTFDKLSTRHSSSGSSRPL. The Helicase ATP-binding domain occupies 192–332; sequence EARAIQRKIV…AVDFITELMF (141 aa). ATP is bound at residue 205 to 212; sequence GPTNSGKT. The Helicase C-terminal domain maps to 354–519; that stretch reads HAVESLDNLK…PTAEQIEMFA (166 aa). Disordered regions lie at residues 679-721 and 742-763; these read DSQP…KSSL and EWAR…RKKK. The segment covering 680–697 has biased composition (polar residues); it reads SQPTDTESNSSSTVPESE.

The protein belongs to the helicase family. Mg(2+) serves as cofactor. The cofactor is Mn(2+).

Its subcellular location is the nucleus. It is found in the mitochondrion matrix. It localises to the mitochondrion nucleoid. The catalysed reaction is ATP + H2O = ADP + phosphate + H(+). In terms of biological role, major helicase player in mitochondrial RNA metabolism. Component of the mitochondrial degradosome (mtEXO) complex, that degrades 3' overhang double-stranded RNA with a 3'-to-5' directionality in an ATP-dependent manner. ATPase and ATP-dependent multisubstrate helicase, able to unwind double-stranded (ds) DNA and RNA, and RNA/DNA heteroduplexes in the 5'-to-3' direction. Plays a role in the RNA surveillance system in mitochondria; regulates the stability of mature mRNAs, the removal of aberrantly formed mRNAs and the rapid degradation of non coding processing intermediates. Also implicated in recombination and chromatin maintenance pathways. May protect cells from apoptosis. Associates with mitochondrial DNA. This chain is ATP-dependent RNA helicase SUPV3L1, mitochondrial (supv3l1), found in Danio rerio (Zebrafish).